The sequence spans 128 residues: Holo-[acyl-carrier-protein] synthase (128 aa).

2 residues coordinate Mg(2+): Asp-8 and Glu-60.

The protein belongs to the P-Pant transferase superfamily. AcpS family. Mg(2+) serves as cofactor.

Its subcellular location is the cytoplasm. It catalyses the reaction apo-[ACP] + CoA = holo-[ACP] + adenosine 3',5'-bisphosphate + H(+). Its function is as follows. Transfers the 4'-phosphopantetheine moiety from coenzyme A to a Ser of acyl-carrier-protein. The polypeptide is Holo-[acyl-carrier-protein] synthase (Anaeromyxobacter dehalogenans (strain 2CP-1 / ATCC BAA-258)).